The chain runs to 47 residues: Large ribosomal subunit protein bL34 (47 aa).

The protein belongs to the bacterial ribosomal protein bL34 family.

The chain is Large ribosomal subunit protein bL34 from Nocardia farcinica (strain IFM 10152).